A 237-amino-acid polypeptide reads, in one-letter code: Urease accessory protein UreF (237 aa).

The protein belongs to the UreF family. In terms of assembly, ureD, UreF and UreG form a complex that acts as a GTP-hydrolysis-dependent molecular chaperone, activating the urease apoprotein by helping to assemble the nickel containing metallocenter of UreC. The UreE protein probably delivers the nickel.

It localises to the cytoplasm. In terms of biological role, required for maturation of urease via the functional incorporation of the urease nickel metallocenter. This is Urease accessory protein UreF from Streptococcus thermophilus (strain ATCC BAA-250 / LMG 18311).